The chain runs to 256 residues: Trans-aconitate 2-methyltransferase (256 aa).

It belongs to the methyltransferase superfamily. Tam family.

The protein localises to the cytoplasm. It carries out the reaction trans-aconitate + S-adenosyl-L-methionine = (E)-3-(methoxycarbonyl)pent-2-enedioate + S-adenosyl-L-homocysteine. In terms of biological role, catalyzes the S-adenosylmethionine monomethyl esterification of trans-aconitate. This is Trans-aconitate 2-methyltransferase from Rhodopseudomonas palustris (strain HaA2).